The primary structure comprises 321 residues: Malate dehydrogenase (321 aa).

NAD(+)-binding positions include 10 to 15 (GSGMIG) and Asp34. Substrate-binding residues include Arg83 and Arg89. Residues Asn96 and 119–121 (ITN) each bind NAD(+). Residues Asn121 and Arg152 each contribute to the substrate site. Catalysis depends on His176, which acts as the Proton acceptor.

It belongs to the LDH/MDH superfamily. MDH type 3 family.

It carries out the reaction (S)-malate + NAD(+) = oxaloacetate + NADH + H(+). In terms of biological role, catalyzes the reversible oxidation of malate to oxaloacetate. The protein is Malate dehydrogenase of Sinorhizobium fredii (strain NBRC 101917 / NGR234).